Here is a 184-residue protein sequence, read N- to C-terminus: Putative manganese efflux pump MntP (184 aa).

A run of 6 helical transmembrane segments spans residues 3-23 (LLSM…ISVS), 36-56 (ALIS…LGWV), 65-85 (VSAL…LKMI), 103-123 (LLVL…SFAL), 126-146 (ISIW…SLAG), and 163-183 (ALGG…NVSF).

The protein belongs to the MntP (TC 9.B.29) family.

The protein localises to the cell membrane. In terms of biological role, probably functions as a manganese efflux pump. This is Putative manganese efflux pump MntP from Methanothermobacter thermautotrophicus (strain ATCC 29096 / DSM 1053 / JCM 10044 / NBRC 100330 / Delta H) (Methanobacterium thermoautotrophicum).